The following is a 35-amino-acid chain: Probable endonuclease 4 (35 aa).

A Zn(2+)-binding site is contributed by Glu-15.

The protein belongs to the AP endonuclease 2 family. Requires Zn(2+) as cofactor.

It carries out the reaction Endonucleolytic cleavage to 5'-phosphooligonucleotide end-products.. In terms of biological role, endonuclease IV plays a role in DNA repair. It cleaves phosphodiester bonds at apurinic or apyrimidinic (AP) sites, generating a 3'-hydroxyl group and a 5'-terminal sugar phosphate. The protein is Probable endonuclease 4 (nfo) of Yersinia enterocolitica.